The primary structure comprises 367 residues: MGTPPGLQTDCEALLSRFQETDSVRFEAFTELWRNMKFGTIFCGRMRNLEKNMFTKEALALAWRYFLPPYTFQIRVGALYLLYGLYNTQLCQPKQKIRVALKDWDEVLKFQQDLVNAQHFDAAYIFRKLRLDRAFHFTAMPKLLSYRMKKKIHRAEVTEEFKDPSDRVMKLITSDVLEEMLNVHDHYQNMKRVISVDKSKPDKALSLIKDDFFDNIKNIVLEHQQWHKDRKNPSLKSKINDGEEKMEGNSQETERCERAESLAKIKSKAFSVVIQASKSRRHRQVKLDSSDCDSASGQGQVKATRKKEKKERLKPAGRKMSFRNKGNVQNIHKEDKPLSLSMPVITEEENESLSGTEFTASKKKRKH.

An SNAPC3-binding region spans residues 1 to 168 (MGTPPGLQTD…EEFKDPSDRV (168 aa)). Residues 164-268 (PSDRVMKLIT…AESLAKIKSK (105 aa)) form an SNAPC4-binding region. Disordered stretches follow at residues 228–254 (KDRK…QETE) and 278–367 (KSRR…KRKH). The segment covering 238–254 (KINDGEEKMEGNSQETE) has biased composition (basic and acidic residues). Residues Ser-289 and Ser-290 each carry the phosphoserine modification. A compositionally biased stretch (polar residues) spans 292–301 (CDSASGQGQV).

Part of the SNAPc complex composed of 5 subunits: SNAPC1, SNAPC2, SNAPC3, SNAPC4 and SNAPC5. SNAPC1 interacts with SNAPC3, SNAPC4 and TBP.

It localises to the nucleus. Its function is as follows. Part of the SNAPc complex required for the transcription of both RNA polymerase II and III small-nuclear RNA genes. Binds to the proximal sequence element (PSE), a non-TATA-box basal promoter element common to these 2 types of genes. Recruits TBP and BRF2 to the U6 snRNA TATA box. The chain is snRNA-activating protein complex subunit 1 (SNAPC1) from Macaca fascicularis (Crab-eating macaque).